Consider the following 118-residue polypeptide: Large ribosomal subunit protein bL20 (118 aa).

Belongs to the bacterial ribosomal protein bL20 family.

Binds directly to 23S ribosomal RNA and is necessary for the in vitro assembly process of the 50S ribosomal subunit. It is not involved in the protein synthesizing functions of that subunit. This is Large ribosomal subunit protein bL20 (rplT) from Thermotoga maritima (strain ATCC 43589 / DSM 3109 / JCM 10099 / NBRC 100826 / MSB8).